Reading from the N-terminus, the 304-residue chain is Aspartate carbamoyltransferase catalytic subunit (304 aa).

The carbamoyl phosphate site is built by Arg-56 and Thr-57. Residue Lys-85 coordinates L-aspartate. Residues Arg-106, His-134, and Gln-137 each contribute to the carbamoyl phosphate site. L-aspartate contacts are provided by Arg-167 and Arg-226. Positions 265 and 266 each coordinate carbamoyl phosphate.

Belongs to the aspartate/ornithine carbamoyltransferase superfamily. ATCase family. Heterooligomer of catalytic and regulatory chains.

It carries out the reaction carbamoyl phosphate + L-aspartate = N-carbamoyl-L-aspartate + phosphate + H(+). Its pathway is pyrimidine metabolism; UMP biosynthesis via de novo pathway; (S)-dihydroorotate from bicarbonate: step 2/3. In terms of biological role, catalyzes the condensation of carbamoyl phosphate and aspartate to form carbamoyl aspartate and inorganic phosphate, the committed step in the de novo pyrimidine nucleotide biosynthesis pathway. This Picrophilus torridus (strain ATCC 700027 / DSM 9790 / JCM 10055 / NBRC 100828 / KAW 2/3) protein is Aspartate carbamoyltransferase catalytic subunit.